A 439-amino-acid polypeptide reads, in one-letter code: Probable E3 ubiquitin-protein ligase makorin-1 (439 aa).

3 consecutive C3H1-type zinc fingers follow at residues 18-45 (WTKH…HDLS), 48-74 (KQTM…HTKP), and 163-190 (EMKK…HGDV). Residues 73–118 (KPSKQDEVPSSKPSMPLTAAPLAGTPEPVSDGPGGTTGAQEKPQGS) are disordered. A makorin-type Cys-His region spans residues 191–218 (CDMCGLQVLHPSDTSQRSQHIRACIEAH). The segment at 236–290 (CGVCMEVVFEKTNPSERRFGILSNCCHCYCLKCIRKWRSAKQFESKIIKSCPECR) adopts an RING-type zinc-finger fold. The C3H1-type 4 zinc-finger motif lies at 319–348 (GMGTKPCRYFDEGRGTCPFGANCFYKHAFP). Residues 352-371 (LEEPQPQRRQNGSNGRNRNT) are disordered. Over residues 358–368 (QRRQNGSNGRN) the composition is skewed to low complexity.

It catalyses the reaction S-ubiquitinyl-[E2 ubiquitin-conjugating enzyme]-L-cysteine + [acceptor protein]-L-lysine = [E2 ubiquitin-conjugating enzyme]-L-cysteine + N(6)-ubiquitinyl-[acceptor protein]-L-lysine.. It participates in protein modification; protein ubiquitination. In terms of biological role, E3 ubiquitin ligase catalyzing the covalent attachment of ubiquitin moieties onto substrate proteins. This is Probable E3 ubiquitin-protein ligase makorin-1 from Danio rerio (Zebrafish).